We begin with the raw amino-acid sequence, 100 residues long: Urease subunit gamma (100 aa).

The protein belongs to the urease gamma subunit family. In terms of assembly, heterotrimer of UreA (gamma), UreB (beta) and UreC (alpha) subunits. Three heterotrimers associate to form the active enzyme.

Its subcellular location is the cytoplasm. It catalyses the reaction urea + 2 H2O + H(+) = hydrogencarbonate + 2 NH4(+). It participates in nitrogen metabolism; urea degradation; CO(2) and NH(3) from urea (urease route): step 1/1. This chain is Urease subunit gamma, found in Saccharopolyspora erythraea (strain ATCC 11635 / DSM 40517 / JCM 4748 / NBRC 13426 / NCIMB 8594 / NRRL 2338).